Consider the following 439-residue polypeptide: Cysteine desulfurase-like protein ustD (439 aa).

Residues 1 to 25 (MKSVATSSLDDVDKDSVPLGSSING) are disordered. Residues 120–121 (TT), Asn-206, and 255–257 (SWY) each bind pyridoxal 5'-phosphate. Residue Lys-258 is modified to N6-(pyridoxal phosphate)lysine.

The protein belongs to the class-V pyridoxal-phosphate-dependent aminotransferase family. Requires pyridoxal 5'-phosphate as cofactor.

Its pathway is mycotoxin biosynthesis. Functionally, cysteine desulfurase-like protein; part of the gene cluster that mediates the biosynthesis of the secondary metabolite ustiloxin B, an antimitotic tetrapeptide. First, ustA is processed by the subtilisin-like endoprotease Kex2 that is outside the ustiloxin B gene cluster, at the C-terminal side of Arg-Lys, after transfer to Golgi apparatus through the endoplasmic reticulum (ER). Cleavage by KEX2 generates 16 peptides YAIG-I to YAIG-XVI. To process the precursor peptide further, at least two peptidases are necessary to cleave the N-terminal and C-terminal sides of the Tyr-Ala-Ile-Gly core peptide which serves as backbone for the synthesis of ustiloxin B, through cyclization and modification of the tyrosine with a non-protein coding amino acid, norvaline. One of the two peptidases must be the serine peptidase ustP; and the other pepdidase is probably ustH. Macrocyclization of the core peptide derived from ustA requires the tyrosinase ustQ, as well as the homologous oxidases ustYa and ustYb, and leads to the production of the first cyclization product N-desmethylustiloxin F. For the formation of N-desmethylustiloxin F, three oxidation steps are required, hydroxylation at the benzylic position, hydroxylation at either the aromatic ring of Tyr or beta-position of Ile, and oxidative cyclization. UstQ may catalyze the oxidation of a phenol moiety, whereas the ustYa and ustYb are most likely responsible for the remaining two-step oxidations. N-desmethylustiloxin F is then methylated by ustM to yield ustiloxin F which in turn substrate of the cytochrome P450 monooxygenase ustC which catalyzes the formation of S-deoxyustiloxin H. The flavoprotein monooxygenases ustF1 and ustF2 then participate in the modification of the side chain of S-deoxyustiloxin H, leading to the synthesis of an oxime intermediate, via ustiloxin H. Finally, carboxylative dehydration performed by the cysteine desulfurase-like protein ustD yields ustiloxin B. In Aspergillus flavus (strain ATCC 200026 / FGSC A1120 / IAM 13836 / NRRL 3357 / JCM 12722 / SRRC 167), this protein is Cysteine desulfurase-like protein ustD.